Consider the following 502-residue polypeptide: Putative diacyglycerol O-acyltransferase MT1809 (502 aa).

Catalysis depends on H174, which acts as the Proton acceptor.

This sequence belongs to the long-chain O-acyltransferase family.

It catalyses the reaction an acyl-CoA + a 1,2-diacyl-sn-glycerol = a triacyl-sn-glycerol + CoA. Its pathway is glycerolipid metabolism; triacylglycerol biosynthesis. The protein is Putative diacyglycerol O-acyltransferase MT1809 of Mycobacterium tuberculosis (strain CDC 1551 / Oshkosh).